Consider the following 792-residue polypeptide: Oxidoreductase cns1 (792 aa).

As to quaternary structure, interacts with cns2.

It localises to the lipid droplet. It participates in secondary metabolite biosynthesis. Its function is as follows. Oxidoreductase; part of the gene cluster that mediates the biosynthesis of cordycepin (COR) and pentostatin (PTN), two adenosine analogs with related bioactivity profiles as both mimic adenosine and can inhibit some of the processes that are adenosine dependent. Within the pathway, cns1 catalyzes the last step by converting the cns2 product 2'-carbonyl-3'-deoxyadenosine (2'-C-3'-dA) into cordycepin (3'-deoxyadenosine). The first step of cordycepin biosynthesis involves hydroxyl phosphorylation of the 3'-OH position on adenosine to produce adenosine-3'-monophosphate (3'-AMP), catalyzed by kinase activity of cns3. Next, 3'-AMP is dephosphorylated to 2'-carbonyl-3'-deoxyadenosine by cns2, which is finally converted to cordycepin by the oxidoreductase cns1. Pentostatin production is mediated by the ATP phosphoribosyltransferase activity of cns3 on adenosine to inhibit the activity of adenosine deaminase (ADA) to prevent COR deamination to 3'-deoxyinosine (3'-dI). The protein is Oxidoreductase cns1 of Cordyceps militaris (strain CM01) (Caterpillar fungus).